The chain runs to 272 residues: Ingression protein fic1 (272 aa).

The 107-residue stretch at 1–107 folds into the C2 domain; sequence MSKNPLGTLV…MKEELQSEWY (107 aa). Positions 155–187 are disordered; that stretch reads VPKKPSKPSKPRKKVPVSHPLPPTPPSREEHVS. Positions 158–170 are enriched in basic residues; it reads KPSKPSKPRKKVP.

It belongs to the INN1/fic1 family. In terms of assembly, interacts with cdc15 and imp2.

Its subcellular location is the cytoplasm. The protein resides in the nucleus. Involved in the ingression of the plasma membrane during cytokinesis, leading to the separation of the daughter cells. Unlike its S.cerevisiae ortholog INN1, it does not play an essential role, probably because the actinomyosin ring is connected to the cell cortex by many more proteins. The polypeptide is Ingression protein fic1 (fic1) (Schizosaccharomyces pombe (strain 972 / ATCC 24843) (Fission yeast)).